The following is a 302-amino-acid chain: Probable alpha-L-glutamate ligase 1 (302 aa).

Positions 104–287 (MQLLSRKGIG…VANMIIEFIE (184 aa)) constitute an ATP-grasp domain. ATP contacts are provided by residues Lys-141, 178-179 (EY), Asp-187, and 211-213 (RSN). Positions 248, 260, and 262 each coordinate Mg(2+). Positions 248, 260, and 262 each coordinate Mn(2+).

The protein belongs to the RimK family. The cofactor is Mg(2+). Requires Mn(2+) as cofactor.

This chain is Probable alpha-L-glutamate ligase 1, found in Pseudoalteromonas atlantica (strain T6c / ATCC BAA-1087).